A 302-amino-acid polypeptide reads, in one-letter code: MAAGSGREEAAAAAGYGRGPPWVFRGRALYQLHLVKAATARAFVPRELRLVEAFGYTLGGMFLARYDDSPAGKFDELVVIAGIVWNPPTSCAWAARVLVNSAEACRHGRKEVGLPSHVATFSQTEADALRNKPLVKSNSFLSLLGMRSTVSNQGNDREIEISETKGSCTRHLCNISVPLTGSHKHKWMGPAIRMSLPSFSGQIEDHPDLLKYSCQVECRVRPVRPAKIWRPRITEPQECPDGKISSKGSEVLAEPDAQKHTVMVLLSKPILALEFNSLEMHVDAPKIVIPHSKKKEVRYSST.

Its function is as follows. Required for neoxanthin biosynthesis. Probably not involved directly in the enzymatic conversion of violaxanthin to neoxanthin. Is necessary but not sufficient for neoxanthin synthesis. This Oryza sativa subsp. japonica (Rice) protein is Protein NEOXANTHIN-DEFICIENT 1.